The following is a 449-amino-acid chain: Argininosuccinate synthase (449 aa).

ATP is bound by residues 17–25 (AFSGGLDTS) and Ala43. Tyr99 lines the L-citrulline pocket. The ATP site is built by Gly129 and Thr131. Residues Thr131, Asn135, and Asp136 each coordinate L-aspartate. Asn135 contributes to the L-citrulline binding site. Asp136 is a binding site for ATP. L-citrulline contacts are provided by Arg139 and Ser192. Asp194 contributes to the ATP binding site. Residues Thr201, Glu203, and Glu280 each coordinate L-citrulline.

Belongs to the argininosuccinate synthase family. Type 2 subfamily. As to quaternary structure, homotetramer.

The protein resides in the cytoplasm. The enzyme catalyses L-citrulline + L-aspartate + ATP = 2-(N(omega)-L-arginino)succinate + AMP + diphosphate + H(+). Its pathway is amino-acid biosynthesis; L-arginine biosynthesis; L-arginine from L-ornithine and carbamoyl phosphate: step 2/3. The chain is Argininosuccinate synthase from Dickeya dadantii (strain 3937) (Erwinia chrysanthemi (strain 3937)).